Here is a 402-residue protein sequence, read N- to C-terminus: 8-amino-7-oxononanoate synthase (402 aa).

Residue R26 participates in substrate binding. 114 to 115 lines the pyridoxal 5'-phosphate pocket; the sequence is GY. Substrate is bound at residue H139. Pyridoxal 5'-phosphate contacts are provided by S182, H210, and T239. The residue at position 242 (K242) is an N6-(pyridoxal phosphate)lysine. T359 is a binding site for substrate.

The protein belongs to the class-II pyridoxal-phosphate-dependent aminotransferase family. BioF subfamily. In terms of assembly, homodimer. Requires pyridoxal 5'-phosphate as cofactor.

It carries out the reaction 6-carboxyhexanoyl-[ACP] + L-alanine + H(+) = (8S)-8-amino-7-oxononanoate + holo-[ACP] + CO2. It functions in the pathway cofactor biosynthesis; biotin biosynthesis. Functionally, catalyzes the decarboxylative condensation of pimeloyl-[acyl-carrier protein] and L-alanine to produce 8-amino-7-oxononanoate (AON), [acyl-carrier protein], and carbon dioxide. The polypeptide is 8-amino-7-oxononanoate synthase (Halorhodospira halophila (strain DSM 244 / SL1) (Ectothiorhodospira halophila (strain DSM 244 / SL1))).